Reading from the N-terminus, the 249-residue chain is MGKKKKRDGAAARRQARVVVGGVRTRAAVTARRVVASAEEGCGLVGRGGGGGSGGDDGEGGCYLRLRSRRLPFVAAAVVSSRREEALGDSVAEAASSSSSRAVELLGCSGEEEAMAEKVCTQAGEDHDEESSVGDSGCGRERSATTPSSRRPPGDADSSDAESNQEAKQQMCRRSSTTSAAAFHAGATTRSFRMMAPPAAAAEIEEFLAAAERSEAERFAAKYNFDVVRGVPLDAGGAGRFEWTAVGSG.

The tract at residues 118-180 (KVCTQAGEDH…MCRRSSTTSA (63 aa)) is disordered. The span at 161–180 (AESNQEAKQQMCRRSSTTSA) shows a compositional bias: polar residues.

This sequence belongs to the CDI family. ICK/KRP subfamily.

This chain is Cyclin-dependent kinase inhibitor 2 (KRP2), found in Oryza sativa subsp. japonica (Rice).